The chain runs to 2014 residues: Fatty acid synthase beta subunit pigK (2014 aa).

The acetyltransferase (AT) domain stretch occupies residues 144-515 (LAAVFGGQST…KDGQGVRVII (372 aa)). Ser263 acts as the For acetyltransferase activity in catalysis. An enoyl reductase (ER) domain region spans residues 570–815 (SRLLDTPPLM…LITEASGVSD (246 aa)). The dehydratase (DH) domain stretch occupies residues 1126–1606 (RSGSPWIHAL…LPGDRLLVNV (481 aa)). A MaoC-like domain is found at 1514–1627 (PGWPGVSSLE…FNVSAFKQAT (114 aa)). The interval 1645 to 2005 (FFFTGQGSQK…VREVFNITQS (361 aa)) is malonyl/palmitoyl transferase (MT/PT) domain. The For malonyltransferase activity role is filled by Ser1790.

This sequence belongs to the fungal fatty acid synthetase subunit beta family. [Alpha(6)beta(6)] hexamers of two multifunctional subunits (alpha and beta).

The enzyme catalyses acetyl-CoA + n malonyl-CoA + 2n NADPH + 4n H(+) = a long-chain-acyl-CoA + n CoA + n CO2 + 2n NADP(+).. It catalyses the reaction holo-[ACP] + acetyl-CoA = acetyl-[ACP] + CoA. The catalysed reaction is holo-[ACP] + malonyl-CoA = malonyl-[ACP] + CoA. It carries out the reaction a (3R)-hydroxyacyl-[ACP] = a (2E)-enoyl-[ACP] + H2O. The enzyme catalyses a 2,3-saturated acyl-[ACP] + NAD(+) = a (2E)-enoyl-[ACP] + NADH + H(+). It catalyses the reaction (9Z)-octadecenoyl-[ACP] + H2O = (9Z)-octadecenoate + holo-[ACP] + H(+). It participates in secondary metabolite biosynthesis. Functionally, fatty acid synthase subunit beta; part of the gene cluster that mediates the biosynthesis of azaphilone pigments (MonAzPs), a complex mixture of compounds with a common azaphilone skeleton very widely used as food colorants. PigJ and pigK form the two subunits of a dedicated fungal fatty acid synthase (FAS) that produces the side chain fatty acyl moiety of MonAzPs, a beta-keto fatty acid. The chain length control of the pigJ-pigK FAS is somewhat flexible as MonAzPs features either a beta-ketooctanoic or a beta-ketodecanoic acid moiety. The beta-ketoacyl-ACP probably serves as the substrate for the acetyltransferase pigD that directly transfers the fatty acyl chain to the C-4 alcohol of the pyran ring. The first step of the pathway is performed by the nrPKS pigA that forms the hexaketide precursor from successive condensations of five malonyl-CoA units, with a simple acetyl-CoA starter unit. The role of esterase pigG is not clear, but it may play at most a supplementary role in the formation of the benzaldehyde produced by the pigA nrPKS. This very reactive benzaldehyde is intercepted by the pigC ketoreductase that to provide the first stable enzyme-free MonAzPs intermediate, 6-(4-hydroxy-2-oxopentyl)-3-methyl-2,4-dioxocyclohexane carbaldehyde, also known as M7PKS-1. The FAD-dependent monooxygenase pigN hydroxylates M7PKS-1 at C-4, which triggers the formation of the pyran ring. PigJ, pigK and pigD are involved in the acetylation of the pyran ring. PigJ and pigK form the two subunits of a dedicated fungal FAS that produces the side chain fatty acyl moiety of MonAzPs and pigD transfers the fatty acyl chain to the C-4 alcohol. PigM and pigO are involved in the elimination of the omega-1 alcohol. PigM acts as an O-acetyltransferase that synthesizes the putative O-11 acetyl intermediate whereas pigO eliminates acetic acid to yield an intermediate with a C10(11) double bond. The dehydration of the C-11 alcohol followed by the reduction of the C6(7) double bond by the NAD(P)H-dependent oxidoreductase pigE increases the electrophilicity of the C-5 ketone of the resulting acyl benzopyran. This in turn sets up the C-5 ketone for an intramolecular Knoevenagel aldol condensation with the C-20 enol of the side chain. This condensation affords the characteristic linear tricyclic carbon skeletons of the yellow pigments that serve as the common precursors for the classical yellow pigments monascin and ankaflavin, orange pigments rubopunctatin and monascorubrin, and red pigments ribropunctamine and monascorubramine. The FAD-dependent oxidoreductase pigF is especially invoved in the biosynthesis of orange and red pigments via desaturation of C6(7). The polypeptide is Fatty acid synthase beta subunit pigK (Monascus ruber (Mold)).